The sequence spans 438 residues: Alpha-methylserine aldolase (438 aa).

Residue lysine 252 is modified to N6-(pyridoxal phosphate)lysine.

Belongs to the SHMT family. Alpha-methylserine aldolase subfamily. In terms of assembly, homodimer. It depends on pyridoxal 5'-phosphate as a cofactor.

The enzyme catalyses 2-methyl-L-serine = formaldehyde + L-alanine. In the alpha-methyl-L-serine synthesis reaction, activity is inhibited by an excess amount of formaldehyde (at a concentration greater than 10 mM). Its function is as follows. Catalyzes the reversible interconversion of alpha-methyl-L-serine to L-alanine and formaldehyde. Cannot use alpha-methyl-D-serine, L-serine or D-serine. Cannot use D-alanine instead of L-alanine as the substrate for alpha-methyl-L-serine synthesis. Does not require tetrahydrofolate (THF) for activity. In Ralstonia sp, this protein is Alpha-methylserine aldolase.